The chain runs to 466 residues: Cytochrome P450 85A (466 aa).

The chain crosses the membrane as a helical span at residues 2–22 (ALFMAILGVLVLLLCLCSALL). Cys-414 provides a ligand contact to heme.

It belongs to the cytochrome P450 family. Heme serves as cofactor.

It is found in the membrane. Functionally, catalyzes the C6-oxidation step in brassinosteroids biosynthesis. The sequence is that of Cytochrome P450 85A from Phaseolus vulgaris (Kidney bean).